The following is a 230-amino-acid chain: 7-cyano-7-deazaguanine synthase (230 aa).

Position 9 to 19 (9 to 19 (YSGGLDSTTCL)) interacts with ATP. Zn(2+)-binding residues include Cys-190, Cys-200, Cys-203, and Cys-206.

The protein belongs to the QueC family. Zn(2+) is required as a cofactor.

The enzyme catalyses 7-carboxy-7-deazaguanine + NH4(+) + ATP = 7-cyano-7-deazaguanine + ADP + phosphate + H2O + H(+). It participates in purine metabolism; 7-cyano-7-deazaguanine biosynthesis. Its function is as follows. Catalyzes the ATP-dependent conversion of 7-carboxy-7-deazaguanine (CDG) to 7-cyano-7-deazaguanine (preQ(0)). This is 7-cyano-7-deazaguanine synthase from Syntrophotalea carbinolica (strain DSM 2380 / NBRC 103641 / GraBd1) (Pelobacter carbinolicus).